A 130-amino-acid chain; its full sequence is Small ribosomal subunit protein uS9 (130 aa).

This sequence belongs to the universal ribosomal protein uS9 family.

This Streptococcus mutans serotype c (strain ATCC 700610 / UA159) protein is Small ribosomal subunit protein uS9.